The primary structure comprises 333 residues: Glyceraldehyde-3-phosphate dehydrogenase 1 (333 aa).

NAD(+) contacts are provided by residues 12 to 13, aspartate 35, and arginine 79; that span reads RI. D-glyceraldehyde 3-phosphate is bound by residues 152–154, threonine 183, arginine 198, 211–212, and arginine 234; these read SCT and SG. Cysteine 153 serves as the catalytic Nucleophile. Residue asparagine 314 coordinates NAD(+).

Belongs to the glyceraldehyde-3-phosphate dehydrogenase family. As to quaternary structure, homotetramer.

It is found in the cytoplasm. The catalysed reaction is D-glyceraldehyde 3-phosphate + phosphate + NAD(+) = (2R)-3-phospho-glyceroyl phosphate + NADH + H(+). The protein operates within carbohydrate degradation; glycolysis; pyruvate from D-glyceraldehyde 3-phosphate: step 1/5. Resistant to pentalenolactone (PL). In terms of biological role, catalyzes the oxidative phosphorylation of glyceraldehyde 3-phosphate (G3P) to 1,3-bisphosphoglycerate (BPG) using the cofactor NAD. The first reaction step involves the formation of a hemiacetal intermediate between G3P and a cysteine residue, and this hemiacetal intermediate is then oxidized to a thioester, with concomitant reduction of NAD to NADH. The reduced NADH is then exchanged with the second NAD, and the thioester is attacked by a nucleophilic inorganic phosphate to produce BPG. This is Glyceraldehyde-3-phosphate dehydrogenase 1 (gap1) from Streptomyces arenae.